The sequence spans 310 residues: Zinc finger protein 346 (310 aa).

M1 bears the N-acetylmethionine mark. Positions 1-12 (MEYPAPAAVQAA) are enriched in low complexity. The interval 1-33 (MEYPAPAAVQAADGGGAGPYNSSELLEGQEPDG) is disordered. The segment at 70–104 (FTNTQCKVCCALLISESQKLAHYQSKKHANKVKRY) adopts a Matrin-type 1 zinc-finger fold. The Zn(2+) site is built by C75, C78, H91, and H97. Residue K114 forms a Glycyl lysine isopeptide (Lys-Gly) (interchain with G-Cter in SUMO2) linkage. Residues 131–165 (DKNQCCPICNMTFSSPVVAQSHYLGKTHAKNLKLK) form a Matrin-type 2 zinc finger. Zn(2+)-binding residues include C136, C139, H152, and H158. A Glycyl lysine isopeptide (Lys-Gly) (interchain with G-Cter in SUMO2) cross-link involves residue K170. 2 Matrin-type zinc fingers span residues 198 to 232 (DPDK…ETKL) and 252 to 286 (GKGY…SPKT). The tract at residues 278-310 (KHKNQSPKTVASSLGQIPMQRQPIQKDSTTLED) is disordered. 2 stretches are compositionally biased toward polar residues: residues 283-292 (SPKTVASSLG) and 299-310 (QPIQKDSTTLED).

As to quaternary structure, forms a heteromeric complex with XPO5 and ILF3. Found in a nuclear export complex with XPO5, RAN, ILF3, ZNF346 and double-stranded RNA. Interacts with XPO5. Interacts with ILF3 in an RNA-independent manner.

It localises to the nucleus. Its subcellular location is the nucleolus. The protein localises to the cytoplasm. Its function is as follows. Binds with low affinity to dsDNA and ssRNA, and with high affinity to dsRNA, with no detectable sequence specificity. The protein is Zinc finger protein 346 (ZNF346) of Pongo abelii (Sumatran orangutan).